The following is a 691-amino-acid chain: Tumor necrosis factor alpha-induced protein 2 (691 aa).

The tract at residues 9–111 is disordered; sequence QGFPGQQSVP…KPRPELDGPL (103 aa). Over residues 12–31 the composition is skewed to polar residues; sequence PGQQSVPGTLNFAVSPQKPR. Residues 33-45 show a composition bias toward low complexity; it reads TSEAESETSMSEA. Residues 91 to 107 show a composition bias toward basic and acidic residues; it reads QPRLSDLEVQPKPRPEL.

This sequence belongs to the SEC6 family.

In terms of biological role, may play a role as a mediator of inflammation and angiogenesis. The sequence is that of Tumor necrosis factor alpha-induced protein 2 (Tnfaip2) from Mus musculus (Mouse).